We begin with the raw amino-acid sequence, 141 residues long: Hemoglobin subunit alpha-A (141 aa).

The Globin domain maps to 1–141 (VLSAADKNNV…VGNVLTAKYR (141 aa)). O2 is bound at residue H58. Residue H87 coordinates heme b.

It belongs to the globin family. In terms of assembly, heterotetramer of two alpha chains and two beta chains. Red blood cells.

Functionally, involved in oxygen transport from the lung to the various peripheral tissues. The protein is Hemoglobin subunit alpha-A (HBAA) of Francolinus pondicerianus (Grey francolin).